The sequence spans 683 residues: Capsid polyprotein VP90 (683 aa).

A compositionally biased stretch (low complexity) spans 1–13; sequence MAGGATAPAGAKP. Disordered regions lie at residues 1 to 45 and 391 to 413; these read MAGG…KQEL and PNAE…QPPA. The span at 14–39 shows a compositional bias: basic residues; it reads KQPKQKQKKPSSQARKKPSQKQKAMK. The span at 398–413 shows a compositional bias: pro residues; the sequence is LPPPTTGAQPQPQPPA.

Belongs to the astroviridae capsid polyprotein family. In terms of processing, specific enzymatic cleavages by the host yield mature proteins.

It localises to the virion. Its function is as follows. Self-assembles to form an icosahedral T=3 immature capsid. In Gallus gallus (Chicken), this protein is Capsid polyprotein VP90.